A 263-amino-acid polypeptide reads, in one-letter code: 5'-nucleotidase SurE (263 aa).

A divalent metal cation is bound by residues aspartate 8, aspartate 9, serine 40, and asparagine 93.

Belongs to the SurE nucleotidase family. A divalent metal cation is required as a cofactor.

The protein localises to the cytoplasm. The catalysed reaction is a ribonucleoside 5'-phosphate + H2O = a ribonucleoside + phosphate. Nucleotidase that shows phosphatase activity on nucleoside 5'-monophosphates. The chain is 5'-nucleotidase SurE from Beijerinckia indica subsp. indica (strain ATCC 9039 / DSM 1715 / NCIMB 8712).